A 242-amino-acid chain; its full sequence is Caffeoyl-CoA O-methyltransferase 4 (242 aa).

K16 contributes to the substrate binding site. S-adenosyl-L-methionine contacts are provided by residues T58, E80, 82 to 83 (GV), S88, D106, and A135. D158 serves as a coordination point for substrate. Residue D158 participates in a divalent metal cation binding. D160 contributes to the S-adenosyl-L-methionine binding site. Residues D184 and N185 each contribute to the a divalent metal cation site. N189 is a binding site for substrate.

This sequence belongs to the class I-like SAM-binding methyltransferase superfamily. Cation-dependent O-methyltransferase family. CCoAMT subfamily. The cofactor is Mg(2+). As to expression, mostly expressed in the bottom and middle parts of the stems.

The enzyme catalyses (E)-caffeoyl-CoA + S-adenosyl-L-methionine = (E)-feruloyl-CoA + S-adenosyl-L-homocysteine + H(+). It functions in the pathway aromatic compound metabolism; phenylpropanoid biosynthesis. In terms of biological role, methylates caffeoyl-CoA to feruloyl-CoA and 5-hydroxyferuloyl-CoA to sinapoyl-CoA. Plays a role in the synthesis of feruloylated polysaccharides. Involved in the reinforcement of the plant cell wall. Also involved in the responding to wounding or pathogen challenge by the increased formation of cell wall-bound ferulic acid polymers. The chain is Caffeoyl-CoA O-methyltransferase 4 (CCOAOMT4) from Nicotiana tabacum (Common tobacco).